The primary structure comprises 239 residues: Ribonuclease PH (239 aa).

Residues Arg87 and Gly125 to Arg127 contribute to the phosphate site.

It belongs to the RNase PH family. In terms of assembly, homohexameric ring arranged as a trimer of dimers.

The enzyme catalyses tRNA(n+1) + phosphate = tRNA(n) + a ribonucleoside 5'-diphosphate. Phosphorolytic 3'-5' exoribonuclease that plays an important role in tRNA 3'-end maturation. Removes nucleotide residues following the 3'-CCA terminus of tRNAs; can also add nucleotides to the ends of RNA molecules by using nucleoside diphosphates as substrates, but this may not be physiologically important. Probably plays a role in initiation of 16S rRNA degradation (leading to ribosome degradation) during starvation. The chain is Ribonuclease PH from Cellvibrio japonicus (strain Ueda107) (Pseudomonas fluorescens subsp. cellulosa).